A 115-amino-acid chain; its full sequence is Integration host factor subunit alpha (115 aa).

Belongs to the bacterial histone-like protein family. In terms of assembly, heterodimer of an alpha and a beta chain.

Functionally, this protein is one of the two subunits of integration host factor, a specific DNA-binding protein that functions in genetic recombination as well as in transcriptional and translational control. In Burkholderia pseudomallei (strain K96243), this protein is Integration host factor subunit alpha.